A 155-amino-acid chain; its full sequence is Small ribosomal subunit protein uS7cz/uS7cy (155 aa).

The protein belongs to the universal ribosomal protein uS7 family. Part of the 30S ribosomal subunit.

The protein localises to the plastid. Its subcellular location is the chloroplast. In terms of biological role, one of the primary rRNA binding proteins, it binds directly to 16S rRNA where it nucleates assembly of the head domain of the 30S subunit. In Populus trichocarpa (Western balsam poplar), this protein is Small ribosomal subunit protein uS7cz/uS7cy (rps7-A).